The primary structure comprises 570 residues: MSNKDLLPIALGKEKADLVFKNGKIIDVFNEKVIEEDLAISNGVIIGFGKYEGKEEVDLEGKFISPGFIDAHLHLESAMVTIEEFAKTVIPLGTLTLVADPHEIANVAGKVGIKYFLTIGNNIPWNFNLMVPSCVPVTTFDKSGSVLNAEKIKELITEENFFGLGEVMDYEGVITGQDYIWDKIELMKDYFIDGHAPKLQGKILNAYLLAGIMADHETTSPNEALEKISKGMYIMVREGSVTRDLQSLLPAINDKNNCNFLFATDDKHPEDLISEGHINFMIKKAIKLGMEPFRAIKLATLNAARSLGLHRLGGIAPGYKADLLIIDNLDELGIFQVYKDGKKVAENGKALFQVNSNNFERPPTIFHSVNIAPIREEDFKIPKGKTYRVINMIQDQIITGEDFFSFPDSFEEERFIRYNINKIAVVERHKSTGKIGLGLIRGFGLESGAIASSIAHDSHNIIVLGTNSCDMKIAVEKIAEIQGGIVIANNQKIVDFIELPIGGLISTDPIGKVSEKLQELRKIVHNLGVKTNSPFMTLAFMGLPVVPKLKITCDGLYDVENHIFVSLVVN.

The protein belongs to the metallo-dependent hydrolases superfamily. Adenine deaminase family. Mn(2+) serves as cofactor.

It catalyses the reaction adenine + H2O + H(+) = hypoxanthine + NH4(+). This chain is Adenine deaminase, found in Petrotoga mobilis (strain DSM 10674 / SJ95).